A 224-amino-acid polypeptide reads, in one-letter code: Phosphoglycolate phosphatase (224 aa).

The active-site Nucleophile is the aspartate 8. Residues aspartate 8 and aspartate 10 each contribute to the Mg(2+) site. Position 151 (lysine 151) interacts with substrate. Residues aspartate 174 and aspartate 178 each coordinate Mg(2+).

It belongs to the archaeal SPP-like hydrolase family. Requires Mg(2+) as cofactor.

The enzyme catalyses 2-phosphoglycolate + H2O = glycolate + phosphate. Functionally, catalyzes the dephosphorylation of 2-phosphoglycolate. The chain is Phosphoglycolate phosphatase from Thermoplasma volcanium (strain ATCC 51530 / DSM 4299 / JCM 9571 / NBRC 15438 / GSS1).